Reading from the N-terminus, the 563-residue chain is PHD finger protein EHD3 (563 aa).

Residues 1–46 (MGSQNRPPPPRKRQPPPPEDHLVTYKRRRSKETQPLPLMANGANSK) are disordered. 3 consecutive PHD-type zinc fingers follow at residues 296-348 (LCPC…CSFK), 420-472 (SNLC…CWYC), and 474-524 (SCLC…CKIR).

In terms of assembly, interacts with TRX1. In terms of tissue distribution, expressed in shoot apical meristem and leaves.

The protein localises to the nucleus. In terms of biological role, probable transcription factor involved in the regulation of floral induction under long day (LD) conditions. Promotes photoperiodic flowering by repressing GHD7, a major floral repressor. Seems to function independently of HD1. The sequence is that of PHD finger protein EHD3 from Oryza sativa subsp. japonica (Rice).